Here is a 353-residue protein sequence, read N- to C-terminus: uncharacterized protein (353 aa).

A disordered region spans residues 69–106 (ISSATPSSTPPATRASSRLQPPKGHQAGGSNSQQQQPS). Residues 70–86 (SSATPSSTPPATRASSR) show a composition bias toward low complexity. Residues 319-353 (GENKEKKMREMSRVYREMTRQMDDTRRDLDRLNQG) adopt a coiled-coil conformation.

This is an uncharacterized protein from Gibberella zeae (strain ATCC MYA-4620 / CBS 123657 / FGSC 9075 / NRRL 31084 / PH-1) (Wheat head blight fungus).